The sequence spans 420 residues: Fasciclin-like arabinogalactan protein 4 (420 aa).

The first 28 residues, Met1–Ala28, serve as a signal peptide directing secretion. FAS1 domains are found at residues Ile29 to Ile177 and Gly205 to Leu351. N-linked (GlcNAc...) asparagine glycans are attached at residues Asn30, Asn40, Asn135, Asn154, Asn167, Asn207, Asn312, and Asn317. Residues Ser360 to Ser388 form a disordered region. Over residues Pro368–Ser384 the composition is skewed to low complexity. Ser396 is lipidated: GPI-anchor amidated serine. The propeptide at Gly397–Val420 is removed in mature form.

The protein belongs to the fasciclin-like AGP family. Expressed in all plant organs and tissues, including guard cells in the leaf.

It localises to the cell membrane. In terms of biological role, may be a cell surface adhesion protein that is required for normal cell expansion. The protein is Fasciclin-like arabinogalactan protein 4 (FLA4) of Arabidopsis thaliana (Mouse-ear cress).